The following is an 85-amino-acid chain: Large ribosomal subunit protein bL27 (85 aa).

Positions 1–20 are disordered; the sequence is MAHKKAGGSTRNGRDSESKR.

The protein belongs to the bacterial ribosomal protein bL27 family.

The sequence is that of Large ribosomal subunit protein bL27 from Yersinia enterocolitica serotype O:8 / biotype 1B (strain NCTC 13174 / 8081).